We begin with the raw amino-acid sequence, 130 residues long: Small ribosomal subunit protein uS9 (130 aa).

It belongs to the universal ribosomal protein uS9 family.

This is Small ribosomal subunit protein uS9 from Nitrosospira multiformis (strain ATCC 25196 / NCIMB 11849 / C 71).